The sequence spans 506 residues: Cytochrome P450 monooxygenase BOA3 (506 aa).

A helical transmembrane segment spans residues Ile-15–Ile-35. Heme is bound at residue Cys-451.

This sequence belongs to the cytochrome P450 family. It depends on heme as a cofactor.

The protein resides in the membrane. Its pathway is polyketide biosynthesis. In terms of biological role, cytochrome P450 monooxygenase; part of the gene cluster A that mediates the biosynthesis of botcinic acid and its botcinin derivatives, acetate-derived polyketides that contribute to virulence when combined with the sesquiterpene botrydial. Botcinic acid and its derivatives have been shown to induce chlorosis and necrosis during host plant infection, but also have antifungal activities. Two polyketide synthases, BOA6 and BOA9, are involved in the biosynthesis of botcinins. BOA6 mediates the formation of the per-methylated tetraketide core by condensation of four units of malonyl-CoA with one unit of acetyl-CoA, which would be methylated in activated methylene groups to yield a bicyclic acid intermediate that could then either be converted to botrylactone derivatives or lose the starter acetate unit through a retro-Claisen type C-C bond cleavage to yield botcinin derivatives. The second polyketide synthase, BOA9, is probably required for the biosynthesis of the tetraketide side chain of botcinins. The methyltransferase (MT) domain within BOA6 is probably responsible for the incorporation of four methyl groups. The trans-enoyl reductase BOA5 might take over the enoyl reductase function of BOA6 that misses an ER domain. The monooxygenases BOA2, BOA3 and BOA4 might be involved in further hydroxylations at C4, C5 and C8, whereas BOA7, close to BOA9, could potentially be involved in the hydroxylation at C4 in the side chain of botcinins. This chain is Cytochrome P450 monooxygenase BOA3, found in Botryotinia fuckeliana (strain B05.10) (Noble rot fungus).